A 359-amino-acid polypeptide reads, in one-letter code: ELAV-like protein 2 (359 aa).

The tract at residues 1 to 39 (METQLSNGPTCNNTANGPTTVNNNCSSPVDSGNTEDSKT) is disordered. RRM domains are found at residues 39-117 (TNLI…YARP) and 125-205 (ANLY…FANN). Ser221 bears the Phosphoserine mark. The region spanning 276–354 (WCIFVYNLAP…RVLQVSFKTN (79 aa)) is the RRM 3 domain.

Belongs to the RRM elav family. Interacts with IGF2BP1. Interacts with MAP1B light chain LC1.

Its function is as follows. RNA-binding protein that binds to the 3' untranslated region (3'UTR) of target mRNAs. Seems to recognize a GAAA motif. Can bind to its own 3'UTR, the FOS 3'UTR and the ID 3'UTR. This is ELAV-like protein 2 (Elavl2) from Rattus norvegicus (Rat).